The following is a 338-amino-acid chain: 1-aminocyclopropane-1-carboxylate deaminase (338 aa).

Lys51 is subject to N6-(pyridoxal phosphate)lysine. Residue Ser78 is the Nucleophile of the active site.

The protein belongs to the ACC deaminase/D-cysteine desulfhydrase family. As to quaternary structure, homotrimer. Pyridoxal 5'-phosphate is required as a cofactor.

It carries out the reaction 1-aminocyclopropane-1-carboxylate + H2O = 2-oxobutanoate + NH4(+). Functionally, catalyzes a cyclopropane ring-opening reaction, the irreversible conversion of 1-aminocyclopropane-1-carboxylate (ACC) to ammonia and alpha-ketobutyrate. Allows growth on ACC as a nitrogen source. This Paraburkholderia xenovorans (strain LB400) protein is 1-aminocyclopropane-1-carboxylate deaminase.